We begin with the raw amino-acid sequence, 252 residues long: 4-hydroxy-tetrahydrodipicolinate reductase (252 aa).

Position 8–13 (8–13 (GALGRM)) interacts with NAD(+). Arg36 serves as a coordination point for NADP(+). NAD(+)-binding positions include 89-91 (GTT) and 114-117 (SSNF). His146 functions as the Proton donor/acceptor in the catalytic mechanism. His147 contacts (S)-2,3,4,5-tetrahydrodipicolinate. Lys150 (proton donor) is an active-site residue. 156 to 157 (GT) lines the (S)-2,3,4,5-tetrahydrodipicolinate pocket.

The protein belongs to the DapB family.

Its subcellular location is the cytoplasm. It carries out the reaction (S)-2,3,4,5-tetrahydrodipicolinate + NAD(+) + H2O = (2S,4S)-4-hydroxy-2,3,4,5-tetrahydrodipicolinate + NADH + H(+). The enzyme catalyses (S)-2,3,4,5-tetrahydrodipicolinate + NADP(+) + H2O = (2S,4S)-4-hydroxy-2,3,4,5-tetrahydrodipicolinate + NADPH + H(+). It functions in the pathway amino-acid biosynthesis; L-lysine biosynthesis via DAP pathway; (S)-tetrahydrodipicolinate from L-aspartate: step 4/4. Catalyzes the conversion of 4-hydroxy-tetrahydrodipicolinate (HTPA) to tetrahydrodipicolinate. The polypeptide is 4-hydroxy-tetrahydrodipicolinate reductase (Methanoculleus marisnigri (strain ATCC 35101 / DSM 1498 / JR1)).